The chain runs to 176 residues: NAD(P)H-quinone oxidoreductase subunit I, chloroplastic (176 aa).

4Fe-4S ferredoxin-type domains follow at residues 55 to 84 and 95 to 124; these read GRIH…VDWE and LNYS…MTEE. [4Fe-4S] cluster is bound by residues Cys-64, Cys-67, Cys-70, Cys-74, Cys-104, Cys-107, Cys-110, and Cys-114.

Belongs to the complex I 23 kDa subunit family. As to quaternary structure, NDH is composed of at least 16 different subunits, 5 of which are encoded in the nucleus. [4Fe-4S] cluster serves as cofactor.

It is found in the plastid. The protein resides in the chloroplast thylakoid membrane. The catalysed reaction is a plastoquinone + NADH + (n+1) H(+)(in) = a plastoquinol + NAD(+) + n H(+)(out). The enzyme catalyses a plastoquinone + NADPH + (n+1) H(+)(in) = a plastoquinol + NADP(+) + n H(+)(out). NDH shuttles electrons from NAD(P)H:plastoquinone, via FMN and iron-sulfur (Fe-S) centers, to quinones in the photosynthetic chain and possibly in a chloroplast respiratory chain. The immediate electron acceptor for the enzyme in this species is believed to be plastoquinone. Couples the redox reaction to proton translocation, and thus conserves the redox energy in a proton gradient. This chain is NAD(P)H-quinone oxidoreductase subunit I, chloroplastic, found in Populus trichocarpa (Western balsam poplar).